The following is a 460-amino-acid chain: Ribosomal protein uS12 methylthiotransferase RimO (460 aa).

Residues 16-130 enclose the MTTase N-terminal domain; it reads NKIHFISLGC…ILSAIESKES (115 aa). [4Fe-4S] cluster is bound by residues Cys-25, Cys-61, Cys-93, Cys-164, Cys-168, and Cys-171. The Radical SAM core domain maps to 150-382; it reads STPKHYAYLK…SQTQKKNVEK (233 aa). A TRAM domain is found at 385–455; sequence KQFVGKIVEA…GYDLVGRVVN (71 aa).

Belongs to the methylthiotransferase family. RimO subfamily. Requires [4Fe-4S] cluster as cofactor.

It is found in the cytoplasm. The enzyme catalyses L-aspartate(89)-[ribosomal protein uS12]-hydrogen + (sulfur carrier)-SH + AH2 + 2 S-adenosyl-L-methionine = 3-methylsulfanyl-L-aspartate(89)-[ribosomal protein uS12]-hydrogen + (sulfur carrier)-H + 5'-deoxyadenosine + L-methionine + A + S-adenosyl-L-homocysteine + 2 H(+). Its function is as follows. Catalyzes the methylthiolation of an aspartic acid residue of ribosomal protein uS12. This is Ribosomal protein uS12 methylthiotransferase RimO from Chlamydia abortus (strain DSM 27085 / S26/3) (Chlamydophila abortus).